We begin with the raw amino-acid sequence, 258 residues long: Thiazole synthase (258 aa).

Catalysis depends on Lys-100, which acts as the Schiff-base intermediate with DXP. Residues Gly-161, 187–188 (AG), and 209–210 (NT) contribute to the 1-deoxy-D-xylulose 5-phosphate site.

Belongs to the ThiG family. As to quaternary structure, homotetramer. Forms heterodimers with either ThiH or ThiS.

It localises to the cytoplasm. It catalyses the reaction [ThiS sulfur-carrier protein]-C-terminal-Gly-aminoethanethioate + 2-iminoacetate + 1-deoxy-D-xylulose 5-phosphate = [ThiS sulfur-carrier protein]-C-terminal Gly-Gly + 2-[(2R,5Z)-2-carboxy-4-methylthiazol-5(2H)-ylidene]ethyl phosphate + 2 H2O + H(+). It participates in cofactor biosynthesis; thiamine diphosphate biosynthesis. In terms of biological role, catalyzes the rearrangement of 1-deoxy-D-xylulose 5-phosphate (DXP) to produce the thiazole phosphate moiety of thiamine. Sulfur is provided by the thiocarboxylate moiety of the carrier protein ThiS. In vitro, sulfur can be provided by H(2)S. The protein is Thiazole synthase of Campylobacter jejuni subsp. doylei (strain ATCC BAA-1458 / RM4099 / 269.97).